Reading from the N-terminus, the 220-residue chain is Transcriptional regulatory protein LnrK (220 aa).

The region spanning 3 to 119 is the Response regulatory domain; it reads KIIITDDQDI…TIVKAVMTVH (117 aa). Aspartate 54 is modified (4-aspartylphosphate). The 66-residue stretch at 151–216 folds into the HTH luxR-type domain; sequence KPNELLDLTE…QAAIYSVRYG (66 aa). A DNA-binding region (H-T-H motif) is located at residues 175 to 194; that stretch reads NKEIAEKLYITEGTVKNHVS.

In terms of processing, phosphorylated by LnrJ.

It is found in the cytoplasm. In terms of biological role, required for resistance to linearmycins, a family of antibiotic-specialized metabolites produced by some streptomycetes. Member of the two-component regulatory system LnrJ/LnrK, which induces expression of the LnrLMN ABC transporter in response to linearmycins and other polyenes. Probably binds to the promoter region of the lnrLMN operon and directly regulates its expression. May also promote biofilm formation. The polypeptide is Transcriptional regulatory protein LnrK (Bacillus subtilis (strain 168)).